The sequence spans 63 residues: Large ribosomal subunit protein uL29 (63 aa).

This sequence belongs to the universal ribosomal protein uL29 family.

The chain is Large ribosomal subunit protein uL29 from Hahella chejuensis (strain KCTC 2396).